A 62-amino-acid polypeptide reads, in one-letter code: Small ribosomal subunit protein eS27 (62 aa).

Cysteine 17, cysteine 20, cysteine 36, and cysteine 39 together coordinate Zn(2+). The C4-type zinc-finger motif lies at 17–39 (CNDCENEQIIFGSASRKITCVVC).

This sequence belongs to the eukaryotic ribosomal protein eS27 family. In terms of assembly, part of the 30S ribosomal subunit. Zn(2+) is required as a cofactor.

In Methanosarcina mazei (strain ATCC BAA-159 / DSM 3647 / Goe1 / Go1 / JCM 11833 / OCM 88) (Methanosarcina frisia), this protein is Small ribosomal subunit protein eS27.